The chain runs to 302 residues: tRNA dimethylallyltransferase (302 aa).

9 to 16 (GPTGTGKS) provides a ligand contact to ATP. Residue 11-16 (TGTGKS) participates in substrate binding.

It belongs to the IPP transferase family. As to quaternary structure, monomer. The cofactor is Mg(2+).

It carries out the reaction adenosine(37) in tRNA + dimethylallyl diphosphate = N(6)-dimethylallyladenosine(37) in tRNA + diphosphate. In terms of biological role, catalyzes the transfer of a dimethylallyl group onto the adenine at position 37 in tRNAs that read codons beginning with uridine, leading to the formation of N6-(dimethylallyl)adenosine (i(6)A). The protein is tRNA dimethylallyltransferase of Mycolicibacterium smegmatis (strain ATCC 700084 / mc(2)155) (Mycobacterium smegmatis).